Consider the following 186-residue polypeptide: Elongation factor P (186 aa).

Residue R32 is glycosylated (N-alpha-linked (Rha) arginine).

It belongs to the elongation factor P family. In terms of processing, glycosylated ar Arg-32 by EarP: arginine rhamnosylation is required for EF-P function and rescue of polyproline stalled ribosomes.

The protein resides in the cytoplasm. The protein operates within protein biosynthesis; polypeptide chain elongation. Functionally, involved in peptide bond synthesis. Stimulates efficient translation and peptide-bond synthesis on native or reconstituted 70S ribosomes in vitro. Probably functions indirectly by altering the affinity of the ribosome for aminoacyl-tRNA, thus increasing their reactivity as acceptors for peptidyl transferase. This is Elongation factor P from Shewanella oneidensis (strain ATCC 700550 / JCM 31522 / CIP 106686 / LMG 19005 / NCIMB 14063 / MR-1).